Reading from the N-terminus, the 252-residue chain is Phosphate import ATP-binding protein PstB (252 aa).

An ABC transporter domain is found at 5-247; sequence MRGQDVKVFY…PKEQRTQDYI (243 aa). Residue 37-44 participates in ATP binding; that stretch reads GPSGCGKS.

The protein belongs to the ABC transporter superfamily. Phosphate importer (TC 3.A.1.7) family. In terms of assembly, the complex is composed of two ATP-binding proteins (PstB), two transmembrane proteins (PstC and PstA) and a solute-binding protein (PstS).

It localises to the cell inner membrane. The catalysed reaction is phosphate(out) + ATP + H2O = ADP + 2 phosphate(in) + H(+). Part of the ABC transporter complex PstSACB involved in phosphate import. Responsible for energy coupling to the transport system. In Bartonella quintana (strain Toulouse) (Rochalimaea quintana), this protein is Phosphate import ATP-binding protein PstB.